The chain runs to 346 residues: Archaeosine synthase subunit beta (346 aa).

Residues 36 to 276 (GVQTKTLTVI…LRQAKAAHPE (241 aa)) form the Radical SAM core domain. Positions 51, 59, and 62 each coordinate [4Fe-4S] cluster.

Belongs to the radical SAM superfamily. RaSEA family. Forms a robust complex with the archaeosine synthase alpha subunit ArcS. This complex likely consists of an alpha(2)beta(2) heterotetrameric structure. [4Fe-4S] cluster serves as cofactor.

The enzyme catalyses 7-N-[(5S)-5-amino-5-carboxypentyl]formamidino-7-deazaguanosine(15) in tRNA + S-adenosyl-L-methionine = archaeosine(15) in tRNA + L-1-piperideine-6-carboxylate + 5'-deoxyadenosine + L-methionine + 2 H(+). It functions in the pathway tRNA modification; archaeosine-tRNA biosynthesis. Its function is as follows. Radical SAM enzyme involved in the synthesis of archaeosine, a modified nucleoside present in the dihydrouridine loop (D-loop) of archaeal tRNAs. Catalyzes the cleavage of the C(epsilon)-N bond of the lysine moiety of q0kN15-tRNA, leading to the formation of archaeosine at position 15 in tRNAs. This is Archaeosine synthase subunit beta from Methanosarcina acetivorans (strain ATCC 35395 / DSM 2834 / JCM 12185 / C2A).